The sequence spans 79 residues: DNA-directed RNA polymerase subunit omega (79 aa).

Belongs to the RNA polymerase subunit omega family. As to quaternary structure, the RNAP catalytic core consists of 2 alpha, 1 beta, 1 beta' and 1 omega subunit. When a sigma factor is associated with the core the holoenzyme is formed, which can initiate transcription.

It carries out the reaction RNA(n) + a ribonucleoside 5'-triphosphate = RNA(n+1) + diphosphate. Promotes RNA polymerase assembly. Latches the N- and C-terminal regions of the beta' subunit thereby facilitating its interaction with the beta and alpha subunits. The sequence is that of DNA-directed RNA polymerase subunit omega from Thermotoga petrophila (strain ATCC BAA-488 / DSM 13995 / JCM 10881 / RKU-1).